We begin with the raw amino-acid sequence, 1201 residues long: MKMNRHFTVPQNGESSTIQWTKRNSKITNPDGSKVFEANDILVPEDWSQVAVDILAQKYFRRKGVPKYLKKVQEDGIPEWLQKSIPDTEKLESLKPEDRFGGETSALEVFHRLAGCWTYWGYKYKYFSDEESAKIFYDEIVYMLATQMAAPNSPQWFNTGLNWAYGIDGKSQGHYYVDPSTGKLVKSTSAYEHPQPHACFIQSVDDDLVNEGGIMDLWVREARLFKYGSGTGTNFSNLRGENEPLSGGGKSSGLMSFLKIGDRAAGAIKSGGTTRRAAKMVCLDVDHPDIENFIDWKVTEEKKVASLVTGSMLNNRHLNAIMSACYEMEGEDRFNPKKNSSLKKTIQDAKKVLIPDNYIKRVIDLARQGYKEILFEELTTDWQSDAYNTVSGQNSNNSIRLTNEFMAAVEQDQPWNLYFRTEKEKAKVEGRKAKPSQTLRARELWEKISYAAWASADPGTQYHTTINEWHTCPEDGPINASNPCSEYMFLDNTACNLASANLQKFVNLETLNFDVEGFRYLCKLWTIILEISVTMAQFPSKEIAELSYKFRTLGLGYANLGSVLMVLGIPYDSQQAMAITGAISSIMHMTAYATSAEMAKEQGPFVGYAKNQKHMLRVIRNHRRAAYNAPSGDYEGLTITPIGINPAFCPSYMLKAAQEDADLALSLGEKYGFRNAQVTVIAPTGTIGLVMDCDTTGIEPDFALVKFKKLAGGGYFKIINQSVPYGLKKLGYSPSEIEAIVNYCKGHATLNGAPVINTQALKEKGFTNEILEKVEASLPLAFDINFAFNKFNLGENFLTKNLGISKEIFDSPGFSLLEHLGFTKEDINKANDYVCGTMTIENAPFLKEKDYPVFDCANKCGKYGKRFLSYESHIRIMAAAQPFISGAISKTINLPEEAVIEDIKNAYFLSWKMMIKANALYRDGSKLSQPLNSVLELLNGIEIDDQEEIREATISKDPVQIAEKIVTKYISHRRKLPSRRAGYTQKAIVGGHKVYLRTGEYEDGQIGEIFIDMHKEGAAFRSLMNAFAISVSLGLQHGVPLEEYVDAFTFFKFEPNGIVSGNKHIKMSTSVIDYIFRELAITYLGRYDLGQVAPEDLRGDEIGSKRATAESNGQEKETLSSMTAVIEPTPKKEVETISYSQMISKEKPSSSPSGISLLEEVKLAKIKGYTGDSCSECGSFEMVRNGSCLKCMSCGSTTGCS.

Substrate contacts are provided by residues Ser-153, 198–199, Gly-230, 482–486, and 683–687; these read AC, NPCSE, and PTGTI. Cys-199 and Cys-495 form a disulfide bridge. Asn-482 acts as the Proton acceptor in catalysis. Cys-484 serves as the catalytic Cysteine radical intermediate. Residue Glu-486 is the Proton acceptor of the active site. Positions 1100–1118 are enriched in basic and acidic residues; it reads DEIGSKRATAESNGQEKET. The tract at residues 1100-1120 is disordered; it reads DEIGSKRATAESNGQEKETLS.

It belongs to the ribonucleoside diphosphate reductase class-2 family. Adenosylcob(III)alamin serves as cofactor.

The catalysed reaction is a 2'-deoxyribonucleoside 5'-diphosphate + [thioredoxin]-disulfide + H2O = a ribonucleoside 5'-diphosphate + [thioredoxin]-dithiol. Its function is as follows. Catalyzes the reduction of ribonucleotides to deoxyribonucleotides. May function to provide a pool of deoxyribonucleotide precursors for DNA repair during oxygen limitation and/or for immediate growth after restoration of oxygen. The protein is Vitamin B12-dependent ribonucleotide reductase (nrdJ) of Leptospira interrogans serogroup Icterohaemorrhagiae serovar copenhageni (strain Fiocruz L1-130).